Reading from the N-terminus, the 241-residue chain is uncharacterized protein (241 aa).

It localises to the cytoplasm. Its subcellular location is the nucleus. This is an uncharacterized protein from Schizosaccharomyces pombe (strain 972 / ATCC 24843) (Fission yeast).